We begin with the raw amino-acid sequence, 104 residues long: uncharacterized protein (104 aa).

Its subcellular location is the mitochondrion. This is an uncharacterized protein from Claviceps purpurea (Ergot fungus).